We begin with the raw amino-acid sequence, 125 residues long: Prefoldin subunit beta (125 aa).

Belongs to the prefoldin subunit beta family. As to quaternary structure, heterohexamer of two alpha and four beta subunits.

The protein resides in the cytoplasm. Its function is as follows. Molecular chaperone capable of stabilizing a range of proteins. Seems to fulfill an ATP-independent, HSP70-like function in archaeal de novo protein folding. The chain is Prefoldin subunit beta from Sulfolobus acidocaldarius (strain ATCC 33909 / DSM 639 / JCM 8929 / NBRC 15157 / NCIMB 11770).